A 41-amino-acid chain; its full sequence is Photosystem II reaction center protein L (41 aa).

A helical membrane pass occupies residues 20 to 40 (SLYWGLLLIFVLAVPFSNYFF).

This sequence belongs to the PsbL family. In terms of assembly, PSII is composed of 1 copy each of membrane proteins PsbA, PsbB, PsbC, PsbD, PsbE, PsbF, PsbH, PsbI, PsbJ, PsbK, PsbL, PsbM, PsbT, PsbX, PsbY, PsbZ, Psb30/Ycf12, at least 3 peripheral proteins of the oxygen-evolving complex and a large number of cofactors. It forms dimeric complexes.

Its subcellular location is the plastid. The protein resides in the chloroplast thylakoid membrane. Its function is as follows. One of the components of the core complex of photosystem II (PSII). PSII is a light-driven water:plastoquinone oxidoreductase that uses light energy to abstract electrons from H(2)O, generating O(2) and a proton gradient subsequently used for ATP formation. It consists of a core antenna complex that captures photons, and an electron transfer chain that converts photonic excitation into a charge separation. This subunit is found at the monomer-monomer interface and is required for correct PSII assembly and/or dimerization. This is Photosystem II reaction center protein L from Pinus koraiensis (Korean pine).